Reading from the N-terminus, the 195-residue chain is Probable cobalt-precorrin-6B C(15)-methyltransferase (decarboxylating) (195 aa).

Residues T24, 48–52, D72, and A101 each bind S-adenosyl-L-methionine; that span reads GCGTG.

This sequence belongs to the methyltransferase superfamily. Archaeal-type CbiT family.

It carries out the reaction Co-precorrin-6B + S-adenosyl-L-methionine = Co-precorrin-7 + S-adenosyl-L-homocysteine + CO2. It functions in the pathway cofactor biosynthesis; adenosylcobalamin biosynthesis; cob(II)yrinate a,c-diamide from sirohydrochlorin (anaerobic route): step 8/10. Functionally, catalyzes the methylation of C-15 in cobalt-precorrin-6B followed by the decarboxylation of C-12 to form cobalt-precorrin-7. The chain is Probable cobalt-precorrin-6B C(15)-methyltransferase (decarboxylating) from Pyrobaculum calidifontis (strain DSM 21063 / JCM 11548 / VA1).